The primary structure comprises 911 residues: Disks large homolog 1 (911 aa).

The region spanning Arg4–Pro64 is the L27 domain. Ser39 carries the phosphoserine; by CaMK2 modification. The segment at Ser70–Val105 is disordered. A compositionally biased stretch (polar residues) spans Glu83 to Ser96. 3 positions are modified to phosphoserine: Ser122, Ser138, and Ser158. The interaction with SH3 domains stretch occupies residues Pro162 to Tyr212. PDZ domains are found at residues Glu224 to Arg310 and Glu318 to Pro404. Positions Glu224–Arg545 are required for interaction with MARCHF2. The residue at position 232 (Ser232) is a Phosphoserine; by CaMK2. Tyr398 bears the Phosphotyrosine mark. Polar residues predominate over residues Thr419–Ala441. Residues Thr419–Pro443 form a disordered region. The region spanning Lys465–Arg545 is the PDZ 3 domain. Phosphoserine occurs at positions 567, 572, 574, 578, 597, 618, 684, 687, and 841. The SH3 domain occupies Lys580–Glu650. The interval Lys662–Tyr696 is disordered. The Guanylate kinase-like domain occupies Thr721–Glu896.

Belongs to the MAGUK family. Homotetramer. Interacts (via guanylate kinase-like domain) with DLGAP1, DLGAP2, DLGAP3, DLGAP4 and MAP1A. Interacts (via guanylate kinase-like domain) with KIF13B. May interact with HTR2A. Interacts (via PDZ domains) with GRIA1. Interacts (via PDZ domains) with GRIN2A. Interacts (via PDZ domains) with KCND2 and KCND3. Interacts (via PDZ domains) with KCNA1, KCNA2, KCNA3 and KCNA4. Interacts (via PDZ domains) with ADGRA3. Interacts with KCNF1. Interacts with CAMK2. Interacts with cytoskeleton-associated protein EPB41. Interacts with cytoskeleton-associated protein EZR. Found in a complex with KCNA5 and CAV3. Found in a complex with APC and CTNNB1. Interacts (via PDZ domains) with APC. Interacts with CDH1 through binding to PIK3R1. Forms multiprotein complexes with CASK, LIN7A, LIN7B, LIN7C, APBA1, and KCNJ12. Interacts with TOPK. Forms a tripartite complex composed of DLG1, MPP7 and LIN7 (LIN7A or LIN7C). May interact with TJAP1. Interacts with PTEN. Interacts with FRMPD4 (via C-terminus). Interacts with LRFN1 and LRFN2. Interacts with LRFN4 and SFPQ. Interacts (via PDZ domains) with ADGRA2 (via PDZ-binding motif). Interacts with ADAM10; this interaction recruits ADAM10 to the cell membrane during long-term depression in hippocampal neurons. Interacts with DGKI (via PDZ-binding motif). Interacts (via PDZ domains) with MARCHF2 (via PDZ domain); the interaction leads to DLG1 ubiqtuitination and degradation. Interacts (via N-terminus) with MPP3; this interaction connects CADM1 with DLG1 and links CADM1 with the regulatory subunit of phosphoinositide-3-kinase (PI3K) by forming a multiprotein complex and participates in cell spreading. Post-translationally, phosphorylated by MAPK12. Phosphorylation of Ser-39 modulates transport to the plasma membrane. Phosphorylation of Ser-232 regulates association with GRIN2A. Ubiquitinated; by MARCHF2 which results in its degradation. As to expression, widely expressed. Strongly expressed in epithelial cells, in the small intestine it is only detected in the vili. Expressed in brain, heart (at protein level), muscle, lung and liver. In the brain it was detected in olfactory bulbs, cerebral cortex, hippocampus, and spinal cord (at protein level).

Its subcellular location is the cell membrane. The protein localises to the basolateral cell membrane. The protein resides in the endoplasmic reticulum membrane. It is found in the postsynaptic density. It localises to the synapse. Its subcellular location is the sarcolemma. The protein localises to the cell junction. The protein resides in the cytoplasm. It is found in the apical cell membrane. Its function is as follows. Essential multidomain scaffolding protein required for normal development. Recruits channels, receptors and signaling molecules to discrete plasma membrane domains in polarized cells. Promotes epithelial cell layer barrier function via maintaining cell-cell adhesion. May play a role in adherens junction assembly, signal transduction, cell proliferation, synaptogenesis and lymphocyte activation. Regulates the excitability of cardiac myocytes by modulating the functional expression of Kv4 channels. Functional regulator of Kv1.5 channel. During long-term depression in hippocampal neurons, it recruits ADAM10 to the plasma membrane. This chain is Disks large homolog 1, found in Rattus norvegicus (Rat).